The sequence spans 421 residues: Dihydroorotase (421 aa).

Positions 60 and 62 each coordinate Zn(2+). Substrate-binding positions include 62 to 64 (HFR) and N94. D151, H178, and H231 together coordinate Zn(2+). A substrate-binding site is contributed by N277. D304 lines the Zn(2+) pocket. Residue D304 is part of the active site. Residue H308 participates in substrate binding.

This sequence belongs to the metallo-dependent hydrolases superfamily. DHOase family. Class I DHOase subfamily. The cofactor is Zn(2+).

It catalyses the reaction (S)-dihydroorotate + H2O = N-carbamoyl-L-aspartate + H(+). It participates in pyrimidine metabolism; UMP biosynthesis via de novo pathway; (S)-dihydroorotate from bicarbonate: step 3/3. Functionally, catalyzes the reversible cyclization of carbamoyl aspartate to dihydroorotate. The polypeptide is Dihydroorotase (Clostridioides difficile (strain 630) (Peptoclostridium difficile)).